Consider the following 489-residue polypeptide: Ammonium transporter MEP3 (489 aa).

The Extracellular segment spans residues 1–17 (MARGDGHLWTETYDSST). A helical transmembrane segment spans residues 18–38 (VAFMILGAALVFFMVPGLGFL). The Cytoplasmic segment spans residues 39–48 (YSGLARRKSA). Residues 49–69 (LALIWVVIMATLVGILQWYFW) form a helical membrane-spanning segment. At 70–108 (GYSLAFSKTATNNKFIGNLDSFGFRNVYGKISDDSTYPE) the chain is on the extracellular side. The helical transmembrane segment at 109–129 (LIYAIFQMMFMCVALSIIAGA) threads the bilayer. Topologically, residues 130 to 139 (TAERGKLFPH) are cytoplasmic. Residues 140–160 (MVFLFVFATLVYCPITYWIWA) traverse the membrane as a helical segment. Residues 161–173 (PGGWAYQWGVLDW) are Extracellular-facing. The chain crosses the membrane as a helical span at residues 174-194 (AGGGNIEILSAVAGFVYSYFL). Over 195–209 (GRRKENLLINFRPHN) the chain is Cytoplasmic. The chain crosses the membrane as a helical span at residues 210–230 (VSMVTLGTSILWFGWLLFNAA). Topologically, residues 231-239 (SSLSPNMRS) are extracellular. The chain crosses the membrane as a helical span at residues 240–260 (VYAFMNTCLSATTGGMTWCLL). Over 261 to 267 (DYRSEKK) the chain is Cytoplasmic. A helical membrane pass occupies residues 268–288 (WSTVGLCSGIICGLVAATPSS). A topological domain (extracellular) is located at residue glycine 289. A helical membrane pass occupies residues 290 to 310 (CITLYGSLIQGIIAGVVCNFA). The Cytoplasmic portion of the chain corresponds to 311-330 (TKIKYYLKVDDSLDLLAEHG). A helical membrane pass occupies residues 331 to 351 (IAGVVGLIFNALFAADWVIGM). The Extracellular portion of the chain corresponds to 352–372 (DGTTKHKGGWLTHNWKQMYIQ). The helical transmembrane segment at 373–393 (IAYIGASAGYCAVVTAIICFV) threads the bilayer. Residues 394 to 489 (LGKIPGVHLR…NPKLHHAKEA (96 aa)) are Cytoplasmic-facing. Polar residues predominate over residues 448–481 (GANSASETNPTEDSQNSSLSSATVSGQNEKSNNP). The segment at 448–489 (GANSASETNPTEDSQNSSLSSATVSGQNEKSNNPKLHHAKEA) is disordered.

This sequence belongs to the ammonia transporter channel (TC 1.A.11.2) family.

It is found in the membrane. Its function is as follows. Transporter for ammonium (both charged and uncharged NH3 and NH4) to use as a nitrogen source. The affinity of MEP2 is about twenty times higher than that of MEP1. MEP3 has the lowest affinity. This Saccharomyces cerevisiae (strain ATCC 204508 / S288c) (Baker's yeast) protein is Ammonium transporter MEP3 (MEP3).